A 219-amino-acid polypeptide reads, in one-letter code: Protein DCL homolog, chloroplastic (219 aa).

The N-terminal 48 residues, 1-48 (MSLASIPSSSPVASPYFRCRTYIFSFSSSPLCLYFPRGDSTSLRPRVR), are a transit peptide targeting the chloroplast. Residues 70–96 (LRRPRIASEESSEEEEEEEEENSEGDE) are disordered. Positions 79–96 (ESSEEEEEEEEENSEGDE) are enriched in acidic residues.

In terms of tissue distribution, expressed in leaves, stems, flowers and siliques.

It localises to the plastid. It is found in the chloroplast. Functionally, required for normal plastid function and plant development. Required for correct plastid ribosome assembly. Required for processing and maturation of 4.5S rRNA. The protein is Protein DCL homolog, chloroplastic of Arabidopsis thaliana (Mouse-ear cress).